We begin with the raw amino-acid sequence, 586 residues long: Germ cell nuclear acidic protein (586 aa).

4 disordered regions span residues 17–119, 176–202, 217–266, and 279–318; these read GWDR…LSSE, KAKTVKTPKSVQKTKKPAPSLCNSPVF, TWRT…SSEE, and LGGRTSASPMPSAEPKPQRPCLSTPSATGRKTGSQVPVKD. A compositionally biased stretch (basic and acidic residues) spans 65–76; sequence SGKENRSQEEHI. The segment covering 94–107 has biased composition (polar residues); that stretch reads TPKSTFKQSASSAQ. A compositionally biased stretch (basic residues) spans 176–191; it reads KAKTVKTPKSVQKTKK. Basic and acidic residues predominate over residues 225–244; sequence PPSDEHQATSKDREETEKPR. Polar residues predominate over residues 299 to 313; sequence CLSTPSATGRKTGSQ. The SprT-like domain maps to 383 to 482; that stretch reads KLYQLYNTSV…LYARKAMLAH (100 aa).

Belongs to the serine-aspartate repeat-containing protein (SDr) family.

The protein localises to the nucleus. It localises to the PML body. The protein resides in the chromosome. In terms of biological role, may play a role in DNA-protein cross-links (DPCs) clearance, ensuring the genomic stability by protecting germ cells and early embryos from various sources of damage. The protein is Germ cell nuclear acidic protein (gcna) of Danio rerio (Zebrafish).